A 79-amino-acid chain; its full sequence is RNA-binding protein KhpA (79 aa).

One can recognise a KH domain in the interval 32–79; that stretch reads TVVIELRVDPAELGKVIGKQGRIARALRTILTAIGRKIGKRVVLEILE.

The protein belongs to the KhpA RNA-binding protein family.

The protein resides in the cytoplasm. In terms of biological role, a probable RNA-binding protein. The sequence is that of RNA-binding protein KhpA from Aquifex aeolicus (strain VF5).